The primary structure comprises 438 residues: DNA primase small subunit (438 aa).

Residues Glu-63, Asp-127, and Asp-129 contribute to the active site. Residues 139-149 (CCSGAGVCLKC) carry the Zinc knuckle motif motif.

This sequence belongs to the eukaryotic-type primase small subunit family. As to quaternary structure, heterodimer of a catalytic subunit Prim1 and a regulatory subunit Prim2, also known as the DNA primase complex. Component of the alpha DNA polymerase complex (also known as the alpha DNA polymerase-primase complex) consisting of four subunits: the catalytic subunit PolA1, the regulatory subunit PolA2, and the primase complex subunits Prim1 and Prim2 respectively. PolA1 associates with the DNA primase complex before association with PolA2. The cofactor is Mg(2+). It depends on Mn(2+) as a cofactor. As to expression, expressed in embryos (at protein level).

With respect to regulation, the presence of the regulatory subunit Prim2 accelerates the kinetics of initiation and primer extension. Catalytic subunit of the DNA primase complex and component of the DNA polymerase alpha complex (also known as the alpha DNA polymerase-primase complex) which play an essential role in the initiation of DNA synthesis. During the S phase of the cell cycle, the DNA polymerase alpha complex (composed of a catalytic subunit PolA1, an accessory subunit PolA2 and two primase subunits, the catalytic subunit Prim1 and the regulatory subunit Prim2) is recruited to DNA at the replicative forks. The primase subunit of the polymerase alpha complex initiates DNA synthesis by oligomerising short RNA primers on both leading and lagging strands. These primers are initially extended by the polymerase alpha catalytic subunit and subsequently transferred to polymerase delta and polymerase epsilon for processive synthesis on the lagging and leading strand, respectively. In the primase complex, both subunits are necessary for the initial di-nucleotide formation, but the extension of the primer depends only on the catalytic subunit. Can add both ribo- and deoxynucleotides during elongation of the primers. Binds single stranded DNA. In Drosophila melanogaster (Fruit fly), this protein is DNA primase small subunit.